The sequence spans 223 residues: Thiamine-phosphate synthase (223 aa).

4-amino-2-methyl-5-(diphosphooxymethyl)pyrimidine-binding positions include 37-41 (QLREK) and N69. Residues D70 and D89 each contribute to the Mg(2+) site. Residue S108 participates in 4-amino-2-methyl-5-(diphosphooxymethyl)pyrimidine binding. Position 134 to 136 (134 to 136 (TGT)) interacts with 2-[(2R,5Z)-2-carboxy-4-methylthiazol-5(2H)-ylidene]ethyl phosphate. A 4-amino-2-methyl-5-(diphosphooxymethyl)pyrimidine-binding site is contributed by K137. 2-[(2R,5Z)-2-carboxy-4-methylthiazol-5(2H)-ylidene]ethyl phosphate is bound by residues G167 and 187–188 (VS). The disordered stretch occupies residues 197–223 (AAATRKLQGSVDTASVESQLPSEEPSA). Polar residues predominate over residues 206-217 (SVDTASVESQLP).

It belongs to the thiamine-phosphate synthase family. It depends on Mg(2+) as a cofactor.

It carries out the reaction 2-[(2R,5Z)-2-carboxy-4-methylthiazol-5(2H)-ylidene]ethyl phosphate + 4-amino-2-methyl-5-(diphosphooxymethyl)pyrimidine + 2 H(+) = thiamine phosphate + CO2 + diphosphate. The catalysed reaction is 2-(2-carboxy-4-methylthiazol-5-yl)ethyl phosphate + 4-amino-2-methyl-5-(diphosphooxymethyl)pyrimidine + 2 H(+) = thiamine phosphate + CO2 + diphosphate. It catalyses the reaction 4-methyl-5-(2-phosphooxyethyl)-thiazole + 4-amino-2-methyl-5-(diphosphooxymethyl)pyrimidine + H(+) = thiamine phosphate + diphosphate. The protein operates within cofactor biosynthesis; thiamine diphosphate biosynthesis; thiamine phosphate from 4-amino-2-methyl-5-diphosphomethylpyrimidine and 4-methyl-5-(2-phosphoethyl)-thiazole: step 1/1. Functionally, condenses 4-methyl-5-(beta-hydroxyethyl)thiazole monophosphate (THZ-P) and 2-methyl-4-amino-5-hydroxymethyl pyrimidine pyrophosphate (HMP-PP) to form thiamine monophosphate (TMP). In Haloquadratum walsbyi (strain DSM 16790 / HBSQ001), this protein is Thiamine-phosphate synthase.